The chain runs to 300 residues: Cation-efflux pump FieF (300 aa).

Helical transmembrane passes span alanine 12 to tryptophan 32, isoleucine 39 to valine 59, alanine 82 to isoleucine 102, and proline 114 to phenylalanine 134. Positions 45 and 49 each coordinate Zn(2+). Zn(2+) is bound by residues histidine 153 and aspartate 157. Transmembrane regions (helical) follow at residues serine 156–histidine 176 and alanine 178–glycine 198.

The protein belongs to the cation diffusion facilitator (CDF) transporter (TC 2.A.4) family. FieF subfamily. In terms of assembly, homodimer.

The protein resides in the cell inner membrane. It carries out the reaction Zn(2+)(in) + H(+)(out) = Zn(2+)(out) + H(+)(in). The enzyme catalyses Cd(2+)(in) + H(+)(out) = Cd(2+)(out) + H(+)(in). It catalyses the reaction Fe(2+)(in) + H(+)(out) = Fe(2+)(out) + H(+)(in). Functionally, divalent metal cation transporter which exports Zn(2+), Cd(2+) and possibly Fe(2+). May be involved in zinc and iron detoxification by efflux. The sequence is that of Cation-efflux pump FieF from Escherichia coli O127:H6 (strain E2348/69 / EPEC).